The following is a 405-amino-acid chain: Probable succinyl-diaminopimelate desuccinylase (405 aa).

Residue H72 coordinates Zn(2+). The active site involves D74. D105 provides a ligand contact to Zn(2+). The Proton acceptor role is filled by E139. E140, E165, and H377 together coordinate Zn(2+).

Belongs to the peptidase M20A family. The cofactor is Zn(2+). Co(2+) serves as cofactor.

It carries out the reaction N-succinyl-(2S,6S)-2,6-diaminopimelate + H2O = (2S,6S)-2,6-diaminopimelate + succinate. The protein operates within amino-acid biosynthesis; L-lysine biosynthesis via DAP pathway; LL-2,6-diaminopimelate from (S)-tetrahydrodipicolinate (succinylase route): step 3/3. The chain is Probable succinyl-diaminopimelate desuccinylase (dapE) from Staphylococcus epidermidis (strain ATCC 12228 / FDA PCI 1200).